A 300-amino-acid polypeptide reads, in one-letter code: Very-long-chain enoyl-CoA reductase (300 aa).

A helical membrane pass occupies residues 91 to 111; that stretch reads SLVFICEYAGPLFVYPIFYFL. Asn163 carries an N-linked (GlcNAc...) asparagine glycan. The chain crosses the membrane as a helical span at residues 191–211; the sequence is VYLGLGLWIIGEVFNYICHIQ. An N-linked (GlcNAc...) asparagine glycan is attached at Asn238. A helical transmembrane segment spans residues 243-263; sequence ILSWIGFSILTQTLTSWIFAL.

It belongs to the steroid 5-alpha reductase family.

The protein localises to the endoplasmic reticulum membrane. It catalyses the reaction a very-long-chain 2,3-saturated fatty acyl-CoA + NADP(+) = a very-long-chain (2E)-enoyl-CoA + NADPH + H(+). It participates in lipid metabolism; fatty acid biosynthesis. Catalyzes the last of the four reactions of the long-chain fatty acids elongation cycle. This endoplasmic reticulum-bound enzymatic process, allows the addition of 2 carbons to the chain of long- and very long-chain fatty acids/VLCFAs per cycle. This enzyme reduces the trans-2,3-enoyl-CoA fatty acid intermediate to an acyl-CoA that can be further elongated by entering a new cycle of elongation. Thereby, it participates in the production of VLCFAs of different chain lengths that are involved in multiple biological processes as precursors of membrane lipids and lipid mediators. In Dictyostelium discoideum (Social amoeba), this protein is Very-long-chain enoyl-CoA reductase (gpsn2).